Here is a 235-residue protein sequence, read N- to C-terminus: Tetraspanin-8 (235 aa).

Over 1 to 12 (MAGVSSCLKYSM) the chain is Cytoplasmic. The chain crosses the membrane as a helical span at residues 13-33 (FFFNFLFWVCGTLILGLAIWV). The Extracellular portion of the chain corresponds to 34-52 (RVSKDGKEIITSGDSSTNP). Residues 53–73 (FIAVNILIAVGSIIMVLGFLG) traverse the membrane as a helical segment. The Cytoplasmic segment spans residues 74 to 84 (CCGAVKESRCM). The chain crosses the membrane as a helical span at residues 85–105 (LLLFFIGLLLILILQVAAGIL). Residues 106–203 (GAAFKPEYNR…SLIKDLFEKN (98 aa)) lie on the Extracellular side of the membrane. The N-linked (GlcNAc...) asparagine glycan is linked to Asn-118. A helical transmembrane segment spans residues 204–224 (IIIVIGIAFGLAVIEILGLVF). Residues 225–235 (SMVLYCQIGSK) are Cytoplasmic-facing.

The protein belongs to the tetraspanin (TM4SF) family. Forms homooligomers. Interacts with MEP1B. Interacts with integrin alpha3/ITGA3. Interacts with RICTOR and MTOR. Interacts with ADAM17. Interacts with ECE1.

Its subcellular location is the cell membrane. Functionally, structural component of specialized membrane microdomains known as tetraspanin-enriched microdomains (TERMs), which act as platforms for receptor clustering and signaling. Participates thereby in diverse biological functions such as cell signal transduction, migration and protein trafficking. Promotes ADAM17-mediated TNF-alpha processing through recruitment of ADAM17 to tetraspanin-enriched micro-domains (TEMs). Forms a complex with RICTOR and integrin alpha3/ITGA3 to mediate mTORC2 activation and AKT1 phosphorylation leading to cell migration. Reduces apoptosis and autophagy induced by high glucose levels through forming a complex with mTOR and RICTOR. Contributes to the maintenance of intestinal epithelial barrier and plays a role in the regulation of intestine inflammation by switching interferon gamma receptor 1/IFNGR1 from clathrin-dependent to lipid raft-dependent endocytosis route to limit STAT1 activation magnitude and duration. Acts as a modulator of the endothelin axis by associating with endothelin converting enzyme ECE1 and regulating its activity of conversion of the endothelin-1 precursor to endothelin. In Mus musculus (Mouse), this protein is Tetraspanin-8 (Tspan8).